The primary structure comprises 409 residues: Tryptophan synthase beta chain (409 aa).

Residue lysine 100 is modified to N6-(pyridoxal phosphate)lysine.

The protein belongs to the TrpB family. In terms of assembly, tetramer of two alpha and two beta chains. It depends on pyridoxal 5'-phosphate as a cofactor.

It carries out the reaction (1S,2R)-1-C-(indol-3-yl)glycerol 3-phosphate + L-serine = D-glyceraldehyde 3-phosphate + L-tryptophan + H2O. The protein operates within amino-acid biosynthesis; L-tryptophan biosynthesis; L-tryptophan from chorismate: step 5/5. In terms of biological role, the beta subunit is responsible for the synthesis of L-tryptophan from indole and L-serine. In Pyrobaculum arsenaticum (strain DSM 13514 / JCM 11321 / PZ6), this protein is Tryptophan synthase beta chain.